Here is a 231-residue protein sequence, read N- to C-terminus: Orotidine 5'-phosphate decarboxylase (231 aa).

Residues D11, K33, 60 to 69 (DLKFHDIPNT), T120, R181, Q190, G210, and R211 each bind substrate. The active-site Proton donor is the K62.

It belongs to the OMP decarboxylase family. Type 1 subfamily. In terms of assembly, homodimer.

The enzyme catalyses orotidine 5'-phosphate + H(+) = UMP + CO2. It functions in the pathway pyrimidine metabolism; UMP biosynthesis via de novo pathway; UMP from orotate: step 2/2. Functionally, catalyzes the decarboxylation of orotidine 5'-monophosphate (OMP) to uridine 5'-monophosphate (UMP). This chain is Orotidine 5'-phosphate decarboxylase, found in Vibrio cholerae serotype O1 (strain ATCC 39315 / El Tor Inaba N16961).